The following is a 247-amino-acid chain: Probable transcriptional regulatory protein PC1_1817 (247 aa).

This sequence belongs to the TACO1 family.

The protein localises to the cytoplasm. The polypeptide is Probable transcriptional regulatory protein PC1_1817 (Pectobacterium carotovorum subsp. carotovorum (strain PC1)).